The sequence spans 116 residues: Iron-sulfur cluster insertion protein ErpA (116 aa).

Residues Cys44, Cys108, and Cys110 each contribute to the iron-sulfur cluster site.

Belongs to the HesB/IscA family. In terms of assembly, homodimer. Iron-sulfur cluster is required as a cofactor.

Its function is as follows. Required for insertion of 4Fe-4S clusters for at least IspG. The protein is Iron-sulfur cluster insertion protein ErpA of Stutzerimonas stutzeri (strain A1501) (Pseudomonas stutzeri).